The following is a 98-amino-acid chain: Protein translation factor SUI1 homolog (98 aa).

Belongs to the SUI1 family.

The polypeptide is Protein translation factor SUI1 homolog (Thermococcus gammatolerans (strain DSM 15229 / JCM 11827 / EJ3)).